We begin with the raw amino-acid sequence, 226 residues long: 7-cyano-7-deazaguanine synthase (226 aa).

Position 10–20 (10–20 (LSGGLDSATAA)) interacts with ATP. The Zn(2+) site is built by Cys-191, Cys-199, Cys-202, and Cys-205.

The protein belongs to the QueC family. Requires Zn(2+) as cofactor.

It carries out the reaction 7-carboxy-7-deazaguanine + NH4(+) + ATP = 7-cyano-7-deazaguanine + ADP + phosphate + H2O + H(+). Its pathway is purine metabolism; 7-cyano-7-deazaguanine biosynthesis. In terms of biological role, catalyzes the ATP-dependent conversion of 7-carboxy-7-deazaguanine (CDG) to 7-cyano-7-deazaguanine (preQ(0)). The sequence is that of 7-cyano-7-deazaguanine synthase from Synechococcus sp. (strain CC9902).